Reading from the N-terminus, the 164-residue chain is uncharacterized protein (164 aa).

A run of 4 helical transmembrane segments spans residues Gln25–Gly45, Gly63–Val83, Phe120–Phe140, and Thr141–Met161.

Belongs to the major facilitator superfamily.

The protein resides in the cell membrane. This is an uncharacterized protein from Bacillus subtilis (strain 168).